We begin with the raw amino-acid sequence, 199 residues long: MTRLEEIPSGSRVAGVDEVGRGCLFGPVFAAAVVLDEVAEQRLWQAGLTDSKKLSAKRRAGLVPLIEQHCLTRGLGQASAHEIDAVGIRGATERAMLRALQKLAHPPNVVLVDGNLPLRLWSGSQQTVVGGDSRSAAIAAASVLAKEARDALIRRLSDQFPGYGLERHAGYGTALHQKALLALGPTSLHRRSFLRRLLG.

An RNase H type-2 domain is found at 11–199 (SRVAGVDEVG…RRSFLRRLLG (189 aa)). Residues D17, E18, and D113 each coordinate a divalent metal cation.

The protein belongs to the RNase HII family. The cofactor is Mn(2+). Mg(2+) is required as a cofactor.

The protein localises to the cytoplasm. The enzyme catalyses Endonucleolytic cleavage to 5'-phosphomonoester.. In terms of biological role, endonuclease that specifically degrades the RNA of RNA-DNA hybrids. The protein is Ribonuclease HII of Synechococcus sp. (strain CC9902).